The following is a 78-amino-acid chain: Beta-defensin 12 (78 aa).

Residues 1-27 form the signal peptide; the sequence is MALSREVFYFGFALFFIVVELPSGSWA. 3 cysteine pairs are disulfide-bonded: C46-C73, C53-C67, and C57-C74.

This sequence belongs to the beta-defensin family. As to expression, only expressed in epididymis (caput, corpus and cauda).

Its subcellular location is the secreted. Its function is as follows. Has antibacterial activity. This chain is Beta-defensin 12 (Defb12), found in Mus musculus (Mouse).